The sequence spans 566 residues: Mucin-21 (566 aa).

The N-terminal stretch at 1–24 (MKMQKGNVLLMFGLLLHLEAATNS) is a signal peptide. N25 carries an N-linked (GlcNAc...) asparagine glycan. The segment at 25–68 (NETSTSANTGSSVISSGASTATNSGSSVTSSGVSTATISGSSVT) is disordered. Residues 25–479 (NETSTSANTG…KPGGSLVPWE (455 aa)) are Extracellular-facing. Tandem repeats lie at residues 31–44 (ANTG…GAST), 45–59 (ATNS…GVST), 60–74 (ATIS…GVSI), 75–89 (VTNS…GIST), 90–104 (ATNS…GISI), 105–119 (ATNS…GAST), 120–134 (ATNS…GAST), 135–149 (ATNS…GAST), 150–164 (ATNS…EAST), 165–179 (ATNS…GAST), 180–194 (ATNS…RAST), 195–209 (ATNS…GAST), 210–224 (ATNS…GAGT), 225–239 (ATNS…GAST), 244–254 (ESSTPSSGAGT), 255–269 (ATNS…GAGT), 270–284 (ATNS…GIST), 285–299 (VTNS…GANT), 300–314 (ATNS…GANT), 315–329 (ATNS…GAST), 330–344 (ATNS…GAST), 345–359 (ATNS…GAST), 360–374 (ATNS…GTST), 375–389 (ATNS…GAST), 390–404 (ATTS…GAST), 405–419 (ATNS…GAST), 420–434 (ATNS…GANT), and 435–449 (ATNS…GSGT). The interval 31 to 435 (ANTGSSVISS…STTSSGANTA (405 aa)) is 28 X 15 AA approximate tandem repeats. The interval 106-456 (TNSESSTTSS…SGTAALTGMH (351 aa)) is disordered. Residues 480–500 (IFLITLVSVVAAVGLFAGLFF) form a helical membrane-spanning segment. Topologically, residues 501-566 (CVRNSLSLRN…MEMSGRNSGP (66 aa)) are cytoplasmic. A cytoplasmic tail region spans residues 521 to 566 (GLNHGLGPGPGGNHGAPHRPRWSPNWFWRRPVSSIAMEMSGRNSGP).

In terms of processing, O-glycosylated. In terms of tissue distribution, expressed in lung, large intestine, thymus, and testis. Expressed in normal and malignant bronchial epithelial cells.

It localises to the cell membrane. The chain is Mucin-21 (MUC21) from Homo sapiens (Human).